A 556-amino-acid polypeptide reads, in one-letter code: Oxygen-dependent choline dehydrogenase (556 aa).

4-33 lines the FAD pocket; that stretch reads DYIIIGAGSAGNVLATRLTEDPNTTVLLLE. His473 functions as the Proton acceptor in the catalytic mechanism.

This sequence belongs to the GMC oxidoreductase family. It depends on FAD as a cofactor.

The enzyme catalyses choline + A = betaine aldehyde + AH2. It carries out the reaction betaine aldehyde + NAD(+) + H2O = glycine betaine + NADH + 2 H(+). The protein operates within amine and polyamine biosynthesis; betaine biosynthesis via choline pathway; betaine aldehyde from choline (cytochrome c reductase route): step 1/1. Functionally, involved in the biosynthesis of the osmoprotectant glycine betaine. Catalyzes the oxidation of choline to betaine aldehyde and betaine aldehyde to glycine betaine at the same rate. The polypeptide is Oxygen-dependent choline dehydrogenase (Escherichia coli O17:K52:H18 (strain UMN026 / ExPEC)).